Consider the following 381-residue polypeptide: L-lactate dehydrogenase (381 aa).

Positions 1–380 (MIISASTDYR…TRDSLVRELG (380 aa)) constitute an FMN hydroxy acid dehydrogenase domain. Y24 contacts substrate. Residues S106 and Q127 each contribute to the FMN site. Y129 lines the substrate pocket. Residue T155 participates in FMN binding. R164 lines the substrate pocket. Residue K251 coordinates FMN. Catalysis depends on H275, which acts as the Proton acceptor. Residue R278 participates in substrate binding. 306–330 (DSGIRSGLDVVRMIALGADTVLIGR) is an FMN binding site.

This sequence belongs to the FMN-dependent alpha-hydroxy acid dehydrogenase family. Homotetramer. The cofactor is FMN.

It is found in the cell inner membrane. It catalyses the reaction (S)-lactate + A = pyruvate + AH2. Catalyzes the conversion of L-lactate to pyruvate. Is coupled to the respiratory chain. In Pseudomonas putida (strain ATCC 700007 / DSM 6899 / JCM 31910 / BCRC 17059 / LMG 24140 / F1), this protein is L-lactate dehydrogenase.